The chain runs to 192 residues: Imidazoleglycerol-phosphate dehydratase (192 aa).

It belongs to the imidazoleglycerol-phosphate dehydratase family.

Its subcellular location is the cytoplasm. The catalysed reaction is D-erythro-1-(imidazol-4-yl)glycerol 3-phosphate = 3-(imidazol-4-yl)-2-oxopropyl phosphate + H2O. It functions in the pathway amino-acid biosynthesis; L-histidine biosynthesis; L-histidine from 5-phospho-alpha-D-ribose 1-diphosphate: step 6/9. The polypeptide is Imidazoleglycerol-phosphate dehydratase (Staphylococcus epidermidis (strain ATCC 12228 / FDA PCI 1200)).